Here is a 495-residue protein sequence, read N- to C-terminus: Catalase (495 aa).

The interval Met-1–Gly-25 is disordered. Active-site residues include His-55 and Asn-128. Heme is bound at residue Tyr-338.

The protein belongs to the catalase family. In terms of assembly, homodimer. The cofactor is heme.

It carries out the reaction 2 H2O2 = O2 + 2 H2O. Its function is as follows. Decomposes hydrogen peroxide into water and oxygen; serves to protect cells from the toxic effects of hydrogen peroxide. This chain is Catalase (katA), found in Staphylococcus saprophyticus subsp. saprophyticus (strain ATCC 15305 / DSM 20229 / NCIMB 8711 / NCTC 7292 / S-41).